The primary structure comprises 266 residues: Type 1 encapsulin shell protein (266 aa).

This sequence belongs to the encapsulin family. Family 1 subfamily. This encapsulin nanocompartment is formed by 60 subunits; monomers form 12 pentamers which assemble to form shells. Shells are loaded with 4 encapsulated ferritin-like protein decamers (EncFtn) in a tetrahedral arrangement. A 3 nm gap is consistently seen between the shell and the cargo.

It is found in the encapsulin nanocompartment. Functionally, shell component of a type 1 encapsulin nanocompartment. Assembles into proteinaceous shells about 21 nm in diameter. Small pores form at, or close to, the 2-, 3-, and 5-fold symmetry axes. Data analysis suggests the 5-fold pores open and close with maximal and minimal aperatures of 15 and 5 Angstroms. Cargo protein Fer (ferritin-like protein, probably stores iron) is targeted to the interior via its C-terminal extension; empty intact shells can be isolated in the absence of cargo protein. This chain is Type 1 encapsulin shell protein, found in Haliangium ochraceum (strain DSM 14365 / JCM 11303 / SMP-2).